Here is a 189-residue protein sequence, read N- to C-terminus: Putative nucleotidase BC_3386 (189 aa).

This sequence belongs to the 5'(3')-deoxyribonucleotidase family.

The polypeptide is Putative nucleotidase BC_3386 (Bacillus cereus (strain ATCC 14579 / DSM 31 / CCUG 7414 / JCM 2152 / NBRC 15305 / NCIMB 9373 / NCTC 2599 / NRRL B-3711)).